We begin with the raw amino-acid sequence, 337 residues long: MPHPLLDFAPEVRSALDAGAPVVALESTIVTHGMPHPQNVETARAVAAVVRANGAVPAIVAVVAGRIRIGLPEEILDWLGTAKEVLKLSRADLPHAVAAGLHGSTTVAATMICAHRAGIRVFATGGIGGVHRGVEETLDISADLDELARTPVAVVCAGAKAILDLPRTLEYLETRGVPVVGYRTDRFPAFWSRDSGLPAPLRLDTPEAIAALMRTKEALDLGGGILVANPVPEADEIPAREIAALIATAVAQARAAGIAGKAVTPFLLSRLLDLTGGRSLSTNIALVKNNAALAAQLAVALRGARSSGPQAGAGAPGAEPGPARRTSPARAPSGEGW.

Glutamate 26 acts as the Proton donor in catalysis. The substrate site is built by lysine 87 and valine 107. Aspartate 139 is a binding site for Mn(2+). Residue 141–143 coordinates substrate; it reads SAD. Lysine 160 acts as the Nucleophile in catalysis. Residues 306-325 show a composition bias toward low complexity; sequence SSGPQAGAGAPGAEPGPARR. The tract at residues 306–337 is disordered; it reads SSGPQAGAGAPGAEPGPARRTSPARAPSGEGW.

Belongs to the pseudouridine-5'-phosphate glycosidase family. As to quaternary structure, homotrimer. Mn(2+) serves as cofactor.

The enzyme catalyses D-ribose 5-phosphate + uracil = psi-UMP + H2O. Catalyzes the reversible cleavage of pseudouridine 5'-phosphate (PsiMP) to ribose 5-phosphate and uracil. Functions biologically in the cleavage direction, as part of a pseudouridine degradation pathway. The protein is Pseudouridine-5'-phosphate glycosidase of Methylobacterium nodulans (strain LMG 21967 / CNCM I-2342 / ORS 2060).